The following is a 682-amino-acid chain: Probable xyloglucan glycosyltransferase 6 (682 aa).

The next 2 helical transmembrane spans lie at 109–129 (LIKGFLVVVVLLLCFELAAYF) and 173–193 (IVLFLIQSVDRLVLVLGCFWI). Aspartate 260 is a catalytic residue. Residues aspartate 319 and aspartate 321 each contribute to the substrate site. Aspartate 413 is an active-site residue. The next 2 helical transmembrane spans lie at 491 to 511 (LILPFYSFTLFCVILPLTMFF) and 516 to 536 (LPSWVVCYIPGIMSILNIIPA). At serine 608 the chain carries Phosphoserine. 2 consecutive transmembrane segments (helical) span residues 632–651 (LYRTEIALAFILLAASVRSL) and 657–677 (IHFYFLLFQGITFVIVGLDLI).

Belongs to the glycosyltransferase 2 family. Plant cellulose synthase-like C subfamily. Homodimer. As to expression, mainly expressed in flowers and seeds, and, to a lower extent, in seedlings, roots, leaves and stems.

Its subcellular location is the golgi apparatus membrane. Probable beta-1,4-glucan synthase rather involved in the synthesis of the xyloglucan backbone than cellulose. Seems to work simultaneously with xyloglucan 6-xylosyltransferase. Xyloglucan is a noncellulosic polysaccharides of plant cell wall and consists of a glucan backbone substituted by xylose, galactose and fucose. The polypeptide is Probable xyloglucan glycosyltransferase 6 (Arabidopsis thaliana (Mouse-ear cress)).